We begin with the raw amino-acid sequence, 485 residues long: Glutamyl-tRNA(Gln) amidotransferase subunit A (485 aa).

Residues Lys-78 and Ser-153 each act as charge relay system in the active site. Residue Ser-177 is the Acyl-ester intermediate of the active site.

The protein belongs to the amidase family. GatA subfamily. As to quaternary structure, heterotrimer of A, B and C subunits.

The enzyme catalyses L-glutamyl-tRNA(Gln) + L-glutamine + ATP + H2O = L-glutaminyl-tRNA(Gln) + L-glutamate + ADP + phosphate + H(+). Allows the formation of correctly charged Gln-tRNA(Gln) through the transamidation of misacylated Glu-tRNA(Gln) in organisms which lack glutaminyl-tRNA synthetase. The reaction takes place in the presence of glutamine and ATP through an activated gamma-phospho-Glu-tRNA(Gln). The polypeptide is Glutamyl-tRNA(Gln) amidotransferase subunit A (Bacillus anthracis (strain A0248)).